The sequence spans 89 residues: Small ribosomal subunit protein uS15 (89 aa).

Belongs to the universal ribosomal protein uS15 family. Part of the 30S ribosomal subunit. Forms a bridge to the 50S subunit in the 70S ribosome, contacting the 23S rRNA.

In terms of biological role, one of the primary rRNA binding proteins, it binds directly to 16S rRNA where it helps nucleate assembly of the platform of the 30S subunit by binding and bridging several RNA helices of the 16S rRNA. Functionally, forms an intersubunit bridge (bridge B4) with the 23S rRNA of the 50S subunit in the ribosome. The chain is Small ribosomal subunit protein uS15 from Pseudomonas aeruginosa (strain LESB58).